Reading from the N-terminus, the 111-residue chain is uncharacterized protein (111 aa).

It is found in the mitochondrion. This is an uncharacterized protein from Arabidopsis thaliana (Mouse-ear cress).